Consider the following 163-residue polypeptide: Neurotrophin-3 (163 aa).

The first 3 residues, 1 to 3, serve as a signal peptide directing secretion; sequence IQS. Positions 4–119 are excised as a propeptide; that stretch reads SSMDQGILTE…VLNRTSRRKR (116 aa). Positions 36–61 are disordered; that stretch reads QTARTKDGMQTTVKKTEAEADARASQ. Residues 49-61 show a composition bias toward basic and acidic residues; sequence KKTEAEADARASQ. N-linked (GlcNAc...) asparagine glycosylation occurs at Asn-112.

Belongs to the NGF-beta family.

It is found in the secreted. In terms of biological role, seems to promote the survival of visceral and proprioceptive sensory neurons. The chain is Neurotrophin-3 (NTF3) from Boa constrictor (Boa).